The sequence spans 266 residues: Lipooligosaccharide biosynthesis protein lic2B (266 aa).

The protein belongs to the glycosyltransferase 25 family.

Involved in extracellular lipooligosaccharide (LOS) biosynthesis and virulence expression. Involved in the synthesis of the oligosaccharide moiety of the LOS molecule by adding GalNAc. The polypeptide is Lipooligosaccharide biosynthesis protein lic2B (lic2B) (Haemophilus influenzae).